Here is a 235-residue protein sequence, read N- to C-terminus: Small ribosomal subunit protein uS2 (235 aa).

This sequence belongs to the universal ribosomal protein uS2 family.

The protein is Small ribosomal subunit protein uS2 of Synechococcus sp. (strain RCC307).